The following is a 35-amino-acid chain: Potassium channel toxin alpha-KTx 6.15 (35 aa).

4 cysteine pairs are disulfide-bonded: Cys-3–Cys-24, Cys-9–Cys-29, Cys-13–Cys-31, and Cys-19–Cys-34.

The protein belongs to the short scorpion toxin superfamily. Potassium channel inhibitor family. Alpha-KTx 06 subfamily. In terms of tissue distribution, expressed by the venom gland.

Its subcellular location is the secreted. Functionally, blocks voltage-gated potassium channels rKv1.1/KCNA1 (IC(50)=13 nM), rKv1.2/KCNA2 (IC(50)=16 nM) and rKv1.3/KCNA3 (IC(50)=2 nM). The polypeptide is Potassium channel toxin alpha-KTx 6.15 (Hemiscorpius lepturus (Scorpion)).